The sequence spans 252 residues: Auxin-induced in root cultures protein 12 (252 aa).

Positions 1 to 25 (MASSSSSLLILAVACFVSLISPAIS) are cleaved as a signal peptide. The DOMON domain occupies 49-165 (LNSYLHYTYN…DSVNQVWQIG (117 aa)). N-linked (GlcNAc...) asparagine glycans are attached at residues asparagine 58 and asparagine 61. Methionine 91 lines the heme pocket. N-linked (GlcNAc...) asparagine glycosylation is found at asparagine 114 and asparagine 167. Histidine 176 contributes to the heme binding site. The interval 193–224 (EDAAPGSAPSPGSAPAPGTSGSTTPGTAAGGP) is disordered. The span at 195–219 (AAPGSAPSPGSAPAPGTSGSTTPGT) shows a compositional bias: low complexity. A lipid anchor (GPI-anchor amidated asparagine) is attached at asparagine 226. The propeptide at 227–252 (AGSLTRNVNFGVNLGILVLLGSIFIF) is removed in mature form.

Heme is required as a cofactor.

Its subcellular location is the cell membrane. Its function is as follows. One-heme-containing cytochrome. The protein is Auxin-induced in root cultures protein 12 (AIR12) of Arabidopsis thaliana (Mouse-ear cress).